The sequence spans 324 residues: Beta-ketoacyl-[acyl-carrier-protein] synthase III (324 aa).

Residues Cys-112 and His-251 contribute to the active site. Residues 252–256 (QANLR) form an ACP-binding region. Asn-281 is a catalytic residue.

It belongs to the thiolase-like superfamily. FabH family. In terms of assembly, homodimer.

It localises to the cytoplasm. The enzyme catalyses malonyl-[ACP] + acetyl-CoA + H(+) = 3-oxobutanoyl-[ACP] + CO2 + CoA. The protein operates within lipid metabolism; fatty acid biosynthesis. In terms of biological role, catalyzes the condensation reaction of fatty acid synthesis by the addition to an acyl acceptor of two carbons from malonyl-ACP. Catalyzes the first condensation reaction which initiates fatty acid synthesis and may therefore play a role in governing the total rate of fatty acid production. Possesses both acetoacetyl-ACP synthase and acetyl transacylase activities. Its substrate specificity determines the biosynthesis of branched-chain and/or straight-chain of fatty acids. This chain is Beta-ketoacyl-[acyl-carrier-protein] synthase III, found in Clostridium perfringens (strain SM101 / Type A).